A 204-amino-acid chain; its full sequence is Pro-glucagon (204 aa).

The first 20 residues, 1–20, serve as a signal peptide directing secretion; sequence MTSMYFVAGLLLMIVQGSWQ. The propeptide occupies 84–109; it reads SGQQGVEEREKENLLDQLSSNGLARH. Residue Arg-145 is modified to Arginine amide. Propeptides lie at residues 149-161 and 197-204; these read DFLEEAGTADDIG and RDLLGEYQ.

It belongs to the glucagon family. As to expression, isoform LPII is expressed in both pancreas and intestine. Expression of isoform LPI is restricted to the pancreas. Neither isoform is detected in salivary glands.

It localises to the secreted. Its function is as follows. Plays a key role in glucose metabolism and homeostasis. Regulates blood glucose by increasing gluconeogenesis and decreasing glycolysis. In terms of biological role, potent stimulator of glucose-dependent insulin release. Plays important roles on gastric motility and the suppression of plasma glucagon levels. Functionally, stimulates intestinal growth and up-regulates villus height in the small intestine, concomitant with increased crypt cell proliferation and decreased enterocyte apoptosis. The polypeptide is Pro-glucagon (GCG) (Heloderma suspectum (Gila monster)).